We begin with the raw amino-acid sequence, 95 residues long: Large ribosomal subunit protein uL23 (95 aa).

The protein belongs to the universal ribosomal protein uL23 family. As to quaternary structure, part of the 50S ribosomal subunit. Contacts protein L29.

Binds to 23S rRNA. One of the proteins that surrounds the polypeptide exit tunnel on the outside of the ribosome. This is Large ribosomal subunit protein uL23 from Methanopyrus kandleri (strain AV19 / DSM 6324 / JCM 9639 / NBRC 100938).